The primary structure comprises 150 residues: D-aminoacyl-tRNA deacylase (150 aa).

The Gly-cisPro motif, important for rejection of L-amino acids motif lies at 136 to 137; it reads GP.

Belongs to the DTD family. As to quaternary structure, homodimer.

The protein resides in the cytoplasm. The catalysed reaction is glycyl-tRNA(Ala) + H2O = tRNA(Ala) + glycine + H(+). The enzyme catalyses a D-aminoacyl-tRNA + H2O = a tRNA + a D-alpha-amino acid + H(+). An aminoacyl-tRNA editing enzyme that deacylates mischarged D-aminoacyl-tRNAs. Also deacylates mischarged glycyl-tRNA(Ala), protecting cells against glycine mischarging by AlaRS. Acts via tRNA-based rather than protein-based catalysis; rejects L-amino acids rather than detecting D-amino acids in the active site. By recycling D-aminoacyl-tRNA to D-amino acids and free tRNA molecules, this enzyme counteracts the toxicity associated with the formation of D-aminoacyl-tRNA entities in vivo and helps enforce protein L-homochirality. This Macrococcus caseolyticus (strain JCSC5402) (Macrococcoides caseolyticum) protein is D-aminoacyl-tRNA deacylase.